An 89-amino-acid chain; its full sequence is MSITAERRTALISEYARAANDTGSPEVQIALLSERIANLTEHLKTHAKDFHSRRGLLMLVGQRRGLLDYLKRKEVARYDALIKRLGLRR.

Belongs to the universal ribosomal protein uS15 family. In terms of assembly, part of the 30S ribosomal subunit. Forms a bridge to the 50S subunit in the 70S ribosome, contacting the 23S rRNA.

Its function is as follows. One of the primary rRNA binding proteins, it binds directly to 16S rRNA where it helps nucleate assembly of the platform of the 30S subunit by binding and bridging several RNA helices of the 16S rRNA. Functionally, forms an intersubunit bridge (bridge B4) with the 23S rRNA of the 50S subunit in the ribosome. This is Small ribosomal subunit protein uS15 from Granulibacter bethesdensis (strain ATCC BAA-1260 / CGDNIH1).